Here is a 1411-residue protein sequence, read N- to C-terminus: Alpha-latroinsectotoxin-Lt1a (1411 aa).

A propeptide spanning residues 1-35 (ACSSPEVSIFHFFVYAGSFVKNFKKMKGSSAISKR) is cleaved from the precursor. The helix H8 is the probable transmembrane region of the tetrameric pore inserted in the target cell membrane stretch occupies residues 245-264 (ALYALFYGTETFISIMFYLV). ANK repeat units follow at residues 462–495 (DIHRDLYNAAQVPYAREALSISRTLIQNGANVSE), 499–528 (LGRGAIHAAASAGNYDVGELLLNKDINLLE), 533–562 (NGYTPLHIAADSNKNDFVMFLIGNNADVNV), 567–597 (DLFTPLHLAARRDLTDVTQTLIDITEIDLNA), 601–630 (SGFTPLHLSISSTSETAAILIRNTNAVINI), 634–663 (VGLTPLHLATLQNNLSVSKLLAGKGAYLND), 667–697 (NGMTPLHYAAMTGNLEMVDFLLNQQYININA), 702–732 (KKWTPLHLAILFKKNDVAERLLSDENLNIRL), 736–765 (GGINPLHLASATGNKQLVIELLAKNADVTR), 769–798 (KGFSALHLGIIGKNEEIPFFLVEKGANVND), 802–831 (SGVTPLHFAAGLGKANIFRLLLSRGADIKA), 835–864 (NSQMPIHEAVSNGHLEIVRILIEKDPSLMN), 869–898 (RNEYPFYLAVEKRYKDIFDYFVSKDANVNE), 902–931 (NGNTLLHLFSSTGELEVVQFLMQNGANFRL), 935–965 (ERKTFFDLAIENGRLNIVAFAVEKNKVNLQA), 968–999 (RGKTILYHAICDSAKYDKIEIVKYFIEKLNES), 1000–1029 (ECNPLHEAAAYAHLDLVKYFVQERGINPAE), 1080–1109 (QENTPITVAIFANKVSILNYLVGIGADPNQ), 1112–1142 (DGDPPLYIAARQGRFEIVRCLIEVHKVDINT), and 1146–1175 (ERFTALHAAARNDFMDVVKYLVRQGADVNA). A propeptide spanning residues 1196–1411 (QSSRFLRSGH…KVNSNVSQIK (216 aa)) is cleaved from the precursor. The segment covering 1230–1249 (DKLTQQISSKGTRSDSNSTE) has biased composition (polar residues). Residues 1230 to 1254 (DKLTQQISSKGTRSDSNSTEGKMHS) are disordered. Residues 1331 to 1361 (NVHSKIYKAIMSGRRSVISEMLCSFAEEYSK) form an ANK 21 repeat.

The protein belongs to the cationic peptide 01 (latrotoxin) family. 02 (alpha-latroinsectotoxin) subfamily. As to quaternary structure, homotetramer in membranes. Expressed by the venom gland.

It localises to the secreted. The protein localises to the target cell membrane. Insecticidal presynaptic neurotoxin that induces massive neurotransmitter release at insect (but not vertebrate) neuromuscular junctions. Native toxin forms cation-permeable pores (with high permeability to calcium) in lipid membranes locust muscle membrane and artificial lipid bilayers. May bind to insect neurexin-1 homolog, insect adhesion G protein-coupled receptor L1 homolog, and insect receptor-type tyrosine-protein phosphatase S homolog, and induces neurotransmitter exocytosis both by forming tetrameric pores in membranes and signaling via G protein-coupled receptor. Oligomerization is a process independent of divalent cations. The toxin forms channels with 0.55-0.58 nm entrance diameter and a relatively small conductance in planar phospholipid membranes. In Latrodectus tredecimguttatus (Mediterranean black widow spider), this protein is Alpha-latroinsectotoxin-Lt1a.